The following is a 205-amino-acid chain: High frequency lysogenization protein HflD homolog (205 aa).

Belongs to the HflD family.

The protein resides in the cytoplasm. It is found in the cell inner membrane. In Shewanella baltica (strain OS185), this protein is High frequency lysogenization protein HflD homolog.